The following is a 117-amino-acid chain: Putative iron-sulfur cluster insertion protein ErpA (117 aa).

3 residues coordinate iron-sulfur cluster: cysteine 45, cysteine 109, and cysteine 111.

Belongs to the HesB/IscA family. As to quaternary structure, homodimer. Iron-sulfur cluster serves as cofactor.

Required for insertion of 4Fe-4S clusters. The polypeptide is Putative iron-sulfur cluster insertion protein ErpA (Chromobacterium violaceum (strain ATCC 12472 / DSM 30191 / JCM 1249 / CCUG 213 / NBRC 12614 / NCIMB 9131 / NCTC 9757 / MK)).